Reading from the N-terminus, the 694-residue chain is DNA primase (694 aa).

The segment at 41–65 adopts a CHC2-type zinc-finger fold; sequence CPFHDDKSPSFTVSPAKQFYYCFSC. In terms of domain architecture, Toprim spans 265 to 348; it reads DQAVVVEGYF…QGQVQLRVLN (84 aa). Mg(2+) contacts are provided by E271, D317, and D319.

The protein belongs to the DnaG primase family. Monomer. Interacts with DnaB. Zn(2+) serves as cofactor. The cofactor is Mg(2+).

It carries out the reaction ssDNA + n NTP = ssDNA/pppN(pN)n-1 hybrid + (n-1) diphosphate.. Functionally, RNA polymerase that catalyzes the synthesis of short RNA molecules used as primers for DNA polymerase during DNA replication. This chain is DNA primase, found in Synechococcus elongatus (strain ATCC 33912 / PCC 7942 / FACHB-805) (Anacystis nidulans R2).